The chain runs to 137 residues: Nucleoside diphosphate kinase (137 aa).

ATP contacts are provided by K9, F57, R85, T91, R102, and N112. H115 (pros-phosphohistidine intermediate) is an active-site residue.

This sequence belongs to the NDK family. Homotetramer. It depends on Mg(2+) as a cofactor.

The protein localises to the cytoplasm. It carries out the reaction a 2'-deoxyribonucleoside 5'-diphosphate + ATP = a 2'-deoxyribonucleoside 5'-triphosphate + ADP. The enzyme catalyses a ribonucleoside 5'-diphosphate + ATP = a ribonucleoside 5'-triphosphate + ADP. Major role in the synthesis of nucleoside triphosphates other than ATP. The ATP gamma phosphate is transferred to the NDP beta phosphate via a ping-pong mechanism, using a phosphorylated active-site intermediate. In Citrifermentans bemidjiense (strain ATCC BAA-1014 / DSM 16622 / JCM 12645 / Bem) (Geobacter bemidjiensis), this protein is Nucleoside diphosphate kinase.